The chain runs to 193 residues: Peptidyl-tRNA hydrolase (193 aa).

Residue histidine 17 participates in tRNA binding. Catalysis depends on histidine 22, which acts as the Proton acceptor. Residues phenylalanine 68, asparagine 70, and asparagine 116 each contribute to the tRNA site.

The protein belongs to the PTH family. In terms of assembly, monomer.

It localises to the cytoplasm. It carries out the reaction an N-acyl-L-alpha-aminoacyl-tRNA + H2O = an N-acyl-L-amino acid + a tRNA + H(+). Hydrolyzes ribosome-free peptidyl-tRNAs (with 1 or more amino acids incorporated), which drop off the ribosome during protein synthesis, or as a result of ribosome stalling. In terms of biological role, catalyzes the release of premature peptidyl moieties from peptidyl-tRNA molecules trapped in stalled 50S ribosomal subunits, and thus maintains levels of free tRNAs and 50S ribosomes. This is Peptidyl-tRNA hydrolase from Xanthomonas axonopodis pv. citri (strain 306).